The following is a 659-amino-acid chain: Threonine--tRNA ligase (659 aa).

A TGS domain is found at 1-60 (MTVYLPDGKPLELPEGATAKDVARALGEGWERRAVGAIVDGELYDLLKPLPQGAKVRLLT). The catalytic stretch occupies residues 252–552 (DHRRLGRELE…LIEHFAGDFP (301 aa)). Positions 349, 400, and 529 each coordinate Zn(2+).

It belongs to the class-II aminoacyl-tRNA synthetase family. Homodimer. The cofactor is Zn(2+).

It is found in the cytoplasm. It catalyses the reaction tRNA(Thr) + L-threonine + ATP = L-threonyl-tRNA(Thr) + AMP + diphosphate + H(+). Its function is as follows. Catalyzes the attachment of threonine to tRNA(Thr) in a two-step reaction: L-threonine is first activated by ATP to form Thr-AMP and then transferred to the acceptor end of tRNA(Thr). Also edits incorrectly charged L-seryl-tRNA(Thr). The chain is Threonine--tRNA ligase from Thermus thermophilus (strain ATCC BAA-163 / DSM 7039 / HB27).